The primary structure comprises 408 residues: S-adenosylmethionine synthase (408 aa).

His-15 provides a ligand contact to ATP. Asp-17 serves as a coordination point for Mg(2+). Position 43 (Glu-43) interacts with K(+). The L-methionine site is built by Glu-56 and Gln-100. A flexible loop region spans residues 100-110; sequence QSPDIAQGVNE. ATP-binding positions include 171–173, 248–249, Asp-257, 263–264, Ala-280, and Lys-284; these read DGK, KF, and RK. Asp-257 contacts L-methionine. Lys-288 contributes to the L-methionine binding site.

This sequence belongs to the AdoMet synthase family. As to quaternary structure, homotetramer; dimer of dimers. It depends on Mg(2+) as a cofactor. Requires K(+) as cofactor.

It is found in the cytoplasm. The enzyme catalyses L-methionine + ATP + H2O = S-adenosyl-L-methionine + phosphate + diphosphate. Its pathway is amino-acid biosynthesis; S-adenosyl-L-methionine biosynthesis; S-adenosyl-L-methionine from L-methionine: step 1/1. Functionally, catalyzes the formation of S-adenosylmethionine (AdoMet) from methionine and ATP. The overall synthetic reaction is composed of two sequential steps, AdoMet formation and the subsequent tripolyphosphate hydrolysis which occurs prior to release of AdoMet from the enzyme. The sequence is that of S-adenosylmethionine synthase from Synechococcus sp. (strain CC9902).